The following is a 171-amino-acid chain: Probable deoxyuridine 5'-triphosphate nucleotidohydrolase (171 aa).

It belongs to the dCTP deaminase family. Archaeal dUTPase subfamily.

The enzyme catalyses dUTP + H2O = dUMP + diphosphate + H(+). Its pathway is pyrimidine metabolism; dUMP biosynthesis; dUMP from dCTP (dUTP route): step 2/2. Its function is as follows. This enzyme is involved in nucleotide metabolism: it produces dUMP, the immediate precursor of thymidine nucleotides and it decreases the intracellular concentration of dUTP so that uracil cannot be incorporated into DNA. The polypeptide is Probable deoxyuridine 5'-triphosphate nucleotidohydrolase (Methanosarcina barkeri (strain Fusaro / DSM 804)).